Consider the following 700-residue polypeptide: AP-2 complex subunit beta (700 aa).

A disordered region spans residues 625–700; that stretch reads VGNSFPPTGA…RKLSMKRPFS (76 aa). A Phosphoserine modification is found at S649. The residue at position 652 (T652) is a Phosphothreonine. Residues 653–663 are compositionally biased toward basic and acidic residues; the sequence is AMMDDYDKPAE. S683 carries the phosphoserine modification.

Belongs to the adaptor complexes large subunit family. As to quaternary structure, adaptor protein complex 2 (AP-2) is a heterotetramer composed of two large adaptins (alpha-type subunit APL3 and beta-type subunit APL1), a medium chain (mu-type subunit APM4) and a small adaptin (sigma-type subunit APS2). Interacts with APS2.

It localises to the cell membrane. The protein localises to the membrane. Its subcellular location is the coated pit. Adaptins are components of the adaptor complexes which link clathrin to receptors in coated vesicles. Clathrin-associated protein complexes are believed to interact with the cytoplasmic tails of membrane proteins, leading to their selection and concentration. Beta adaptin is a subunit of the plasma membrane adaptor. The polypeptide is AP-2 complex subunit beta (APL1) (Saccharomyces cerevisiae (strain ATCC 204508 / S288c) (Baker's yeast)).